Consider the following 355-residue polypeptide: Ferrochelatase (355 aa).

The Fe cation site is built by H214 and E295.

It belongs to the ferrochelatase family.

The protein localises to the cytoplasm. The catalysed reaction is heme b + 2 H(+) = protoporphyrin IX + Fe(2+). It functions in the pathway porphyrin-containing compound metabolism; protoheme biosynthesis; protoheme from protoporphyrin-IX: step 1/1. In terms of biological role, catalyzes the ferrous insertion into protoporphyrin IX. This Burkholderia thailandensis (strain ATCC 700388 / DSM 13276 / CCUG 48851 / CIP 106301 / E264) protein is Ferrochelatase.